The sequence spans 126 residues: Holo-[acyl-carrier-protein] synthase (126 aa).

2 residues coordinate Mg(2+): Asp-9 and Glu-58.

It belongs to the P-Pant transferase superfamily. AcpS family. Requires Mg(2+) as cofactor.

It is found in the cytoplasm. It catalyses the reaction apo-[ACP] + CoA = holo-[ACP] + adenosine 3',5'-bisphosphate + H(+). In terms of biological role, transfers the 4'-phosphopantetheine moiety from coenzyme A to a Ser of acyl-carrier-protein. The protein is Holo-[acyl-carrier-protein] synthase of Aliivibrio salmonicida (strain LFI1238) (Vibrio salmonicida (strain LFI1238)).